Reading from the N-terminus, the 195-residue chain is Probable chemoreceptor glutamine deamidase CheD 2 (195 aa).

This sequence belongs to the CheD family.

It carries out the reaction L-glutaminyl-[protein] + H2O = L-glutamyl-[protein] + NH4(+). Probably deamidates glutamine residues to glutamate on methyl-accepting chemotaxis receptors (MCPs), playing an important role in chemotaxis. This Burkholderia thailandensis (strain ATCC 700388 / DSM 13276 / CCUG 48851 / CIP 106301 / E264) protein is Probable chemoreceptor glutamine deamidase CheD 2.